A 358-amino-acid chain; its full sequence is Histidinol-phosphate aminotransferase (358 aa).

Lys218 carries the post-translational modification N6-(pyridoxal phosphate)lysine.

Belongs to the class-II pyridoxal-phosphate-dependent aminotransferase family. Histidinol-phosphate aminotransferase subfamily. Homodimer. Pyridoxal 5'-phosphate is required as a cofactor.

The enzyme catalyses L-histidinol phosphate + 2-oxoglutarate = 3-(imidazol-4-yl)-2-oxopropyl phosphate + L-glutamate. Its pathway is amino-acid biosynthesis; L-histidine biosynthesis; L-histidine from 5-phospho-alpha-D-ribose 1-diphosphate: step 7/9. In Dehalococcoides mccartyi (strain ATCC BAA-2266 / KCTC 15142 / 195) (Dehalococcoides ethenogenes (strain 195)), this protein is Histidinol-phosphate aminotransferase.